We begin with the raw amino-acid sequence, 545 residues long: Hydroxylamine reductase (545 aa).

[4Fe-4S] cluster is bound by residues cysteine 3, cysteine 6, cysteine 15, and cysteine 21. Histidine 241, glutamate 265, cysteine 309, cysteine 396, cysteine 424, cysteine 449, glutamate 483, and lysine 485 together coordinate hybrid [4Fe-2O-2S] cluster. The residue at position 396 (cysteine 396) is a Cysteine persulfide.

This sequence belongs to the HCP family. The cofactor is [4Fe-4S] cluster. Hybrid [4Fe-2O-2S] cluster serves as cofactor.

The protein resides in the cytoplasm. It catalyses the reaction A + NH4(+) + H2O = hydroxylamine + AH2 + H(+). Its function is as follows. Catalyzes the reduction of hydroxylamine to form NH(3) and H(2)O. This chain is Hydroxylamine reductase, found in Zymomonas mobilis subsp. mobilis (strain ATCC 31821 / ZM4 / CP4).